The chain runs to 386 residues: L-lactate oxidase (386 aa).

The FMN hydroxy acid dehydrogenase domain maps to Ala16 to Gly382. Tyr42 serves as a coordination point for pyruvate. FMN contacts are provided by residues Pro95 to Gly97, Ser124, and Gln146. A pyruvate-binding site is contributed by Tyr148. Thr174 is a binding site for FMN. Arg183 serves as a coordination point for pyruvate. Residues Lys253 and Ser275 each coordinate FMN. 2 residues coordinate pyruvate: His277 and Arg280. His277 acts as the Proton acceptor in catalysis. Residues Asp308 to Tyr312 and Arg332 each bind FMN.

This sequence belongs to the FMN-dependent alpha-hydroxy acid dehydrogenase family. As to quaternary structure, homotetramer. FMN is required as a cofactor.

It catalyses the reaction a (2S)-2-hydroxycarboxylate + O2 = a 2-oxocarboxylate + H2O2. The enzyme catalyses (S)-lactate + O2 = pyruvate + H2O2. The catalysed reaction is 2-hydroxyoctanoate + O2 = 2-oxooctanoate + H2O2. It carries out the reaction mandelate + O2 = phenylglyoxylate + H2O2. It catalyses the reaction 2-hydroxyoctadecanoate + O2 = 2-oxooctadecanoate + H2O2. The enzyme catalyses (S)-2-hydroxyglutarate + O2 = H2O2 + 2-oxoglutarate. Oxidase that catalyzes the oxidation of a broad range of 2-hydroxyacids in vitro, such as (S)-lactate, 2-hydroxyoctanoate, mandelate, 2-hydroxyoctadecanoate and (S)-2-hydroxyglutarate, to the corresponding 2-oxoacids, with a reduction of O2 to H2O2. May be involved in the utilization of L-lactate as an energy source for growth. The sequence is that of L-lactate oxidase from Lysinibacillus sphaericus (strain C3-41).